Here is a 91-residue protein sequence, read N- to C-terminus: Large ribosomal subunit protein uL23c (91 aa).

The protein belongs to the universal ribosomal protein uL23 family. In terms of assembly, part of the 50S ribosomal subunit.

The protein localises to the plastid. Its subcellular location is the chloroplast. Its function is as follows. Binds to 23S rRNA. This is Large ribosomal subunit protein uL23c (rpl23) from Marchantia polymorpha (Common liverwort).